The primary structure comprises 358 residues: Transcription factor PCF6 (358 aa).

The segment at 1-29 (MEAAVGDGEGGGGGGGRGKRGRGGGGGEM) is disordered. Gly residues predominate over residues 7 to 16 (DGEGGGGGGG). In terms of domain architecture, TCP spans 52-110 (GKDRHSKVYTAKGIRDRRVRLSVATAIQFYDLQDRLGFDQPSKAIEWLINAASPAIDTL). Disordered regions lie at residues 127 to 163 (ADAA…DKEV) and 282 to 308 (ANRG…QQLQ). Composition is skewed to polar residues over residues 143–156 (LSNK…SETS) and 285–296 (GTLQSNSPSNMS).

In terms of assembly, forms homodimers and heterodimers.

The protein resides in the nucleus. Functionally, transcription activator. Binds the promoter core sequence 5'-GGNCC-3'. The polypeptide is Transcription factor PCF6 (PCF6) (Oryza sativa subsp. indica (Rice)).